Consider the following 233-residue polypeptide: Purine nucleoside phosphorylase DeoD-type (233 aa).

His4 lines the a purine D-ribonucleoside pocket. Phosphate contacts are provided by residues Gly20, Arg24, Arg43, and 87 to 90; that span reads RIGT. A purine D-ribonucleoside contacts are provided by residues 179 to 181 and 203 to 204; these read EME and SD. Asp204 (proton donor) is an active-site residue.

The protein belongs to the PNP/UDP phosphorylase family. As to quaternary structure, homohexamer; trimer of homodimers.

It catalyses the reaction a purine D-ribonucleoside + phosphate = a purine nucleobase + alpha-D-ribose 1-phosphate. The catalysed reaction is a purine 2'-deoxy-D-ribonucleoside + phosphate = a purine nucleobase + 2-deoxy-alpha-D-ribose 1-phosphate. Its function is as follows. Catalyzes the reversible phosphorolytic breakdown of the N-glycosidic bond in the beta-(deoxy)ribonucleoside molecules, with the formation of the corresponding free purine bases and pentose-1-phosphate. In Helicobacter pylori (strain ATCC 700392 / 26695) (Campylobacter pylori), this protein is Purine nucleoside phosphorylase DeoD-type.